A 78-amino-acid polypeptide reads, in one-letter code: Exodeoxyribonuclease 7 small subunit (78 aa).

The protein belongs to the XseB family. Heterooligomer composed of large and small subunits.

Its subcellular location is the cytoplasm. It catalyses the reaction Exonucleolytic cleavage in either 5'- to 3'- or 3'- to 5'-direction to yield nucleoside 5'-phosphates.. Bidirectionally degrades single-stranded DNA into large acid-insoluble oligonucleotides, which are then degraded further into small acid-soluble oligonucleotides. In Mycobacterium leprae (strain TN), this protein is Exodeoxyribonuclease 7 small subunit.